The following is a 145-amino-acid chain: D-aminoacyl-tRNA deacylase (145 aa).

Residues 137 to 138 carry the Gly-cisPro motif, important for rejection of L-amino acids motif; that stretch reads GP.

This sequence belongs to the DTD family. Homodimer.

It localises to the cytoplasm. It carries out the reaction glycyl-tRNA(Ala) + H2O = tRNA(Ala) + glycine + H(+). The enzyme catalyses a D-aminoacyl-tRNA + H2O = a tRNA + a D-alpha-amino acid + H(+). In terms of biological role, an aminoacyl-tRNA editing enzyme that deacylates mischarged D-aminoacyl-tRNAs. Also deacylates mischarged glycyl-tRNA(Ala), protecting cells against glycine mischarging by AlaRS. Acts via tRNA-based rather than protein-based catalysis; rejects L-amino acids rather than detecting D-amino acids in the active site. By recycling D-aminoacyl-tRNA to D-amino acids and free tRNA molecules, this enzyme counteracts the toxicity associated with the formation of D-aminoacyl-tRNA entities in vivo and helps enforce protein L-homochirality. The polypeptide is D-aminoacyl-tRNA deacylase (Pseudomonas fluorescens (strain SBW25)).